Consider the following 829-residue polypeptide: Periplasmic nitrate reductase (829 aa).

The tat-type signal signal peptide spans 1 to 27 (MNRRDFMKANAVIAAASAAGLALPAGA). The region spanning 39–95 (LEWNKAPCRFCGTGCSVMVATREGKVVATHGDANSEVNRGLSCIKGYFLSKIMYGRD) is the 4Fe-4S Mo/W bis-MGD-type domain. [4Fe-4S] cluster contacts are provided by Cys-46, Cys-49, Cys-53, and Cys-81. Mo-bis(molybdopterin guanine dinucleotide) contacts are provided by residues Lys-83, Gln-150, Asn-175, Cys-179, 212 to 219 (WGSNMAEM), 243 to 247 (STFEH), 262 to 264 (QTD), Met-373, Gln-377, Asn-483, 509 to 510 (SD), Lys-532, Asp-559, and 719 to 728 (TGRVLEHWHS). Substrate is bound at residue Trp-795. The Mo-bis(molybdopterin guanine dinucleotide) site is built by Asn-803 and Lys-820.

Belongs to the prokaryotic molybdopterin-containing oxidoreductase family. NasA/NapA/NarB subfamily. As to quaternary structure, component of the periplasmic nitrate reductase NapAB complex composed of NapA and NapB. The cofactor is [4Fe-4S] cluster. It depends on Mo-bis(molybdopterin guanine dinucleotide) as a cofactor. Post-translationally, predicted to be exported by the Tat system. The position of the signal peptide cleavage has not been experimentally proven.

It is found in the periplasm. The enzyme catalyses 2 Fe(II)-[cytochrome] + nitrate + 2 H(+) = 2 Fe(III)-[cytochrome] + nitrite + H2O. In terms of biological role, catalytic subunit of the periplasmic nitrate reductase complex NapAB. Receives electrons from NapB and catalyzes the reduction of nitrate to nitrite. This Shewanella denitrificans (strain OS217 / ATCC BAA-1090 / DSM 15013) protein is Periplasmic nitrate reductase.